The sequence spans 168 residues: Protein-export protein SecB (168 aa).

The protein belongs to the SecB family. Homotetramer, a dimer of dimers. One homotetramer interacts with 1 SecA dimer.

It localises to the cytoplasm. Functionally, one of the proteins required for the normal export of preproteins out of the cell cytoplasm. It is a molecular chaperone that binds to a subset of precursor proteins, maintaining them in a translocation-competent state. It also specifically binds to its receptor SecA. In Rhizobium meliloti (strain 1021) (Ensifer meliloti), this protein is Protein-export protein SecB.